Reading from the N-terminus, the 425-residue chain is Histidine--tRNA ligase 1 (425 aa).

The protein belongs to the class-II aminoacyl-tRNA synthetase family. In terms of assembly, homodimer.

It localises to the cytoplasm. The catalysed reaction is tRNA(His) + L-histidine + ATP = L-histidyl-tRNA(His) + AMP + diphosphate + H(+). The chain is Histidine--tRNA ligase 1 from Bacillus anthracis.